Reading from the N-terminus, the 90-residue chain is DNA-directed RNA polymerase subunit omega (90 aa).

This sequence belongs to the RNA polymerase subunit omega family. The RNAP catalytic core consists of 2 alpha, 1 beta, 1 beta' and 1 omega subunit. When a sigma factor is associated with the core the holoenzyme is formed, which can initiate transcription.

The enzyme catalyses RNA(n) + a ribonucleoside 5'-triphosphate = RNA(n+1) + diphosphate. In terms of biological role, promotes RNA polymerase assembly. Latches the N- and C-terminal regions of the beta' subunit thereby facilitating its interaction with the beta and alpha subunits. The chain is DNA-directed RNA polymerase subunit omega from Beutenbergia cavernae (strain ATCC BAA-8 / DSM 12333 / CCUG 43141 / JCM 11478 / NBRC 16432 / NCIMB 13614 / HKI 0122).